The primary structure comprises 114 residues: Probable non-functional T cell receptor beta variable 5-3 (114 aa).

Positions 1 to 21 (MGPGLLCWELLYLLGAGPVEA) are cleaved as a signal peptide. The Ig-like domain maps to 22-114 (GVTQSPTHLI…SALYLCARSL (93 aa)). An intrachain disulfide couples Cys-42 to Cys-110. N-linked (GlcNAc...) asparagine glycosylation occurs at Asn-96.

Alpha-beta TR is a heterodimer composed of an alpha and beta chain; disulfide-linked. The alpha-beta TR is associated with the transmembrane signaling CD3 coreceptor proteins to form the TR-CD3 (TcR or TCR). The assembly of alpha-beta TR heterodimers with CD3 occurs in the endoplasmic reticulum where a single alpha-beta TR heterodimer associates with one CD3D-CD3E heterodimer, one CD3G-CD3E heterodimer and one CD247 homodimer forming a stable octameric structure. CD3D-CD3E and CD3G-CD3E heterodimers preferentially associate with TR alpha and TR beta chains, respectively. The association of the CD247 homodimer is the last step of TcR assembly in the endoplasmic reticulum and is required for transport to the cell surface.

It is found in the cell membrane. Probable non-functional open reading frame (ORF) of V region of the variable domain of T cell receptor (TR) beta chain. Non-functional ORF generally cannot participate in the synthesis of a productive T cell receptor (TR) chain due to altered V-(D)-J or switch recombination and/or splicing site (at mRNA level) and/or conserved amino acid change (protein level). Alpha-beta T cell receptors are antigen specific receptors which are essential to the immune response and are present on the cell surface of T lymphocytes. Recognize peptide-major histocompatibility (MH) (pMH) complexes that are displayed by antigen presenting cells (APC), a prerequisite for efficient T cell adaptive immunity against pathogens. Binding of alpha-beta TR to pMH complex initiates TR-CD3 clustering on the cell surface and intracellular activation of LCK that phosphorylates the ITAM motifs of CD3G, CD3D, CD3E and CD247 enabling the recruitment of ZAP70. In turn ZAP70 phosphorylates LAT, which recruits numerous signaling molecules to form the LAT signalosome. The LAT signalosome propagates signal branching to three major signaling pathways, the calcium, the mitogen-activated protein kinase (MAPK) kinase and the nuclear factor NF-kappa-B (NF-kB) pathways, leading to the mobilization of transcription factors that are critical for gene expression and essential for T cell growth and differentiation. The T cell repertoire is generated in the thymus, by V-(D)-J rearrangement. This repertoire is then shaped by intrathymic selection events to generate a peripheral T cell pool of self-MH restricted, non-autoaggressive T cells. Post-thymic interaction of alpha-beta TR with the pMH complexes shapes TR structural and functional avidity. The polypeptide is Probable non-functional T cell receptor beta variable 5-3 (Homo sapiens (Human)).